The primary structure comprises 145 residues: D-aminoacyl-tRNA deacylase (145 aa).

Positions 137-138 match the Gly-cisPro motif, important for rejection of L-amino acids motif; the sequence is GP.

Belongs to the DTD family. As to quaternary structure, homodimer.

It is found in the cytoplasm. The enzyme catalyses glycyl-tRNA(Ala) + H2O = tRNA(Ala) + glycine + H(+). It catalyses the reaction a D-aminoacyl-tRNA + H2O = a tRNA + a D-alpha-amino acid + H(+). Its function is as follows. An aminoacyl-tRNA editing enzyme that deacylates mischarged D-aminoacyl-tRNAs. Also deacylates mischarged glycyl-tRNA(Ala), protecting cells against glycine mischarging by AlaRS. Acts via tRNA-based rather than protein-based catalysis; rejects L-amino acids rather than detecting D-amino acids in the active site. By recycling D-aminoacyl-tRNA to D-amino acids and free tRNA molecules, this enzyme counteracts the toxicity associated with the formation of D-aminoacyl-tRNA entities in vivo and helps enforce protein L-homochirality. The protein is D-aminoacyl-tRNA deacylase of Lactobacillus delbrueckii subsp. bulgaricus (strain ATCC 11842 / DSM 20081 / BCRC 10696 / JCM 1002 / NBRC 13953 / NCIMB 11778 / NCTC 12712 / WDCM 00102 / Lb 14).